The following is a 564-amino-acid chain: Carbamoyl phosphate synthase large chain, N-terminal section (564 aa).

The segment at 1-399 (MPETPNKVLI…ALQKAIRSLE (399 aa)) is carboxyphosphate synthetic domain. ATP is bound by residues Arg-127, Arg-167, Gly-173, Gly-174, Glu-206, Val-208, Glu-213, Gly-239, Val-240, His-241, Gln-282, and Glu-296. The region spanning 131–325 (RAFMKKIGEP…IARIAAKIAI (195 aa)) is the ATP-grasp domain. Residues Gln-282, Glu-296, and Asn-298 each contribute to the Mg(2+) site. Mn(2+) contacts are provided by Gln-282, Glu-296, and Asn-298. Residues 400 to 560 (IGEPGLGPSP…YSTYEEECEA (161 aa)) form an oligomerization domain region.

It belongs to the CarB family. As to quaternary structure, composed of two chains; the small (or glutamine) chain promotes the hydrolysis of glutamine to ammonia, which is used by the large (or ammonia) chain to synthesize carbamoyl phosphate. Tetramer of heterodimers (alpha,beta)4. Requires Mg(2+) as cofactor. Mn(2+) is required as a cofactor.

It catalyses the reaction hydrogencarbonate + L-glutamine + 2 ATP + H2O = carbamoyl phosphate + L-glutamate + 2 ADP + phosphate + 2 H(+). The enzyme catalyses hydrogencarbonate + NH4(+) + 2 ATP = carbamoyl phosphate + 2 ADP + phosphate + 2 H(+). Its pathway is amino-acid biosynthesis; L-arginine biosynthesis; carbamoyl phosphate from bicarbonate: step 1/1. It participates in pyrimidine metabolism; UMP biosynthesis via de novo pathway; (S)-dihydroorotate from bicarbonate: step 1/3. Its function is as follows. Large subunit of the glutamine-dependent carbamoyl phosphate synthetase (CPSase). CPSase catalyzes the formation of carbamoyl phosphate from the ammonia moiety of glutamine, carbonate, and phosphate donated by ATP, constituting the first step of 2 biosynthetic pathways, one leading to arginine and/or urea and the other to pyrimidine nucleotides. The large subunit (synthetase) binds the substrates ammonia (free or transferred from glutamine from the small subunit), hydrogencarbonate and ATP and carries out an ATP-coupled ligase reaction, activating hydrogencarbonate by forming carboxy phosphate which reacts with ammonia to form carbamoyl phosphate. The chain is Carbamoyl phosphate synthase large chain, N-terminal section (carB1) from Methanopyrus kandleri (strain AV19 / DSM 6324 / JCM 9639 / NBRC 100938).